A 56-amino-acid polypeptide reads, in one-letter code: Preprotein translocase subunit SecG (56 aa).

Residues 1 to 29 (MAKDKTTLPPTGAGLMRFFDEDTRAIKVS) lie on the Cytoplasmic side of the membrane. Residues 30–51 (PKGVIAIVLVLIAFEVFLHLFG) traverse the membrane as a helical segment. Residues 52-56 (PSIFG) lie on the Extracellular side of the membrane.

It belongs to the SEC61-beta family. As to quaternary structure, component of the protein translocase complex. Heterotrimer consisting of alpha (SecY), beta (SecG) and gamma (SecE) subunits. Can form oligomers of the heterotrimer.

The protein localises to the cell membrane. Functionally, involved in protein export. The function of the beta subunit is unknown, but it may be involved in stabilization of the trimeric complex. The protein is Preprotein translocase subunit SecG of Thermococcus gammatolerans (strain DSM 15229 / JCM 11827 / EJ3).